The primary structure comprises 592 residues: Monocopper oxidase-like protein SKS2 (592 aa).

Positions 1 to 23 (MAATDFFFAFVFSFALIFGFSFA) are cleaved as a signal peptide. 11 N-linked (GlcNAc...) asparagine glycosylation sites follow: N61, N110, N172, N203, N259, N280, N295, N344, N364, N433, and N447. H455 is a Cu cation binding site. N-linked (GlcNAc...) asparagine glycosylation is found at N476 and N536. S564 carries the GPI-anchor amidated serine lipid modification. A propeptide spans 565–592 (ATKSMTNGQLILIFSMMMVLLSSFSSFC) (removed in mature form).

Belongs to the multicopper oxidase family. Cu cation is required as a cofactor.

The protein localises to the cell membrane. This is Monocopper oxidase-like protein SKS2 (SKS2) from Arabidopsis thaliana (Mouse-ear cress).